The sequence spans 404 residues: 1-deoxy-D-xylulose 5-phosphate reductoisomerase (404 aa).

The NADPH site is built by Thr10, Gly11, Ser12, Ile13, Gly36, Arg37, Asn38, and Asn124. Lys125 is a 1-deoxy-D-xylulose 5-phosphate binding site. Glu126 contacts NADPH. Asp150 serves as a coordination point for Mn(2+). 1-deoxy-D-xylulose 5-phosphate contacts are provided by Ser151, Glu152, Ser186, and His209. Residue Glu152 participates in Mn(2+) binding. Residue Gly215 participates in NADPH binding. 1-deoxy-D-xylulose 5-phosphate contacts are provided by Ser222, Asn227, Lys228, and Glu231. Mn(2+) is bound at residue Glu231.

The protein belongs to the DXR family. Homodimer. Mg(2+) is required as a cofactor. Mn(2+) serves as cofactor.

It catalyses the reaction 2-C-methyl-D-erythritol 4-phosphate + NADP(+) = 1-deoxy-D-xylulose 5-phosphate + NADPH + H(+). It participates in isoprenoid biosynthesis; isopentenyl diphosphate biosynthesis via DXP pathway; isopentenyl diphosphate from 1-deoxy-D-xylulose 5-phosphate: step 1/6. In terms of biological role, catalyzes the NADPH-dependent rearrangement and reduction of 1-deoxy-D-xylulose-5-phosphate (DXP) to 2-C-methyl-D-erythritol 4-phosphate (MEP). This Erwinia tasmaniensis (strain DSM 17950 / CFBP 7177 / CIP 109463 / NCPPB 4357 / Et1/99) protein is 1-deoxy-D-xylulose 5-phosphate reductoisomerase.